The sequence spans 136 residues: MSTAKLEDSTQRPLYGERIIEESKIICFDNPNKKRIYEISIQLPEFTCKCPFSGYPDFAKLNITYQPNLKVYELKSLKLYINNFRDIKISHEEVVNRIMDDLVNEGLPHWIHLNAAFNPRGNVSMQLDIFSGQKRN.

The Thioimide intermediate role is filled by Cys-50. Catalysis depends on Asp-57, which acts as the Proton donor. Substrate contacts are provided by residues 72–74 and 91–92; these read YEL and HE.

It belongs to the GTP cyclohydrolase I family. QueF type 1 subfamily.

Its subcellular location is the cytoplasm. It catalyses the reaction 7-aminomethyl-7-carbaguanine + 2 NADP(+) = 7-cyano-7-deazaguanine + 2 NADPH + 3 H(+). Its pathway is tRNA modification; tRNA-queuosine biosynthesis. In terms of biological role, catalyzes the NADPH-dependent reduction of 7-cyano-7-deazaguanine (preQ0) to 7-aminomethyl-7-deazaguanine (preQ1). This is NADPH-dependent 7-cyano-7-deazaguanine reductase from Prochlorococcus marinus (strain AS9601).